A 515-amino-acid polypeptide reads, in one-letter code: G-protein coupled receptor 176 (515 aa).

Residues 1-41 lie on the Extracellular side of the membrane; the sequence is MGHNSSWVSPNTSHPRNTSGAEAGANLSAFGELSEAQLYRQ. Asn-4, Asn-11, Asn-17, and Asn-26 each carry an N-linked (GlcNAc...) asparagine glycan. The helical transmembrane segment at 42-64 threads the bilayer; sequence FTTTVQVVIFIGSLLGNFMVLWS. At 65-77 the chain is on the cytoplasmic side; sequence TCRTTVFKSVTNR. Residues 78 to 98 traverse the membrane as a helical segment; the sequence is FIKNLACSGICASVVCVPFDI. Over 99–108 the chain is Extracellular; sequence ILSSSPHCCW. A helical transmembrane segment spans residues 109 to 129; sequence WIYTMLFCKVLKFLHKVFCSV. The Cytoplasmic portion of the chain corresponds to 130-157; sequence TVLSFPAIALDRYYSVLYPLERKISDAK. A helical transmembrane segment spans residues 158–177; that stretch reads SRELVMYIWAHAVVASVPVF. Residues 178 to 204 lie on the Extracellular side of the membrane; it reads AVTNVADIYAMSTCTEVWSNSLGHLVY. A helical membrane pass occupies residues 205-225; sequence VLIYNVTTVIVPVAVVFLFLI. The Cytoplasmic segment spans residues 226–264; the sequence is LIRRALSASQKKKVIIAALRTPQNTISIPYASQREAELH. The helical transmembrane segment at 265–285 threads the bilayer; sequence ATLLSMVTVFILCSVPYATLV. Over 286–301 the chain is Extracellular; that stretch reads VYQTVLNVPNTSVFLL. Residues 302-322 traverse the membrane as a helical segment; it reads LTAIWLPKVSLLANPVLFLTV. The Cytoplasmic portion of the chain corresponds to 323–515; it reads NKSVRKCLVG…KVSIFPKVDS (193 aa). The interval 407-435 is disordered; that stretch reads SCPEGEQEPPQLAPSVPPPGTVDSEPRVS. Over residues 417 to 426 the composition is skewed to pro residues; the sequence is QLAPSVPPPG.

This sequence belongs to the G-protein coupled receptor 1 family. In terms of tissue distribution, expressed mainly in the brain, with prominent expression in the SCN (at protein level).

The protein resides in the cell membrane. In terms of biological role, orphan receptor involved in normal circadian rhythm behavior. Acts through the G-protein subclass G(z)-alpha and has an agonist-independent basal activity to repress cAMP production. The protein is G-protein coupled receptor 176 (Gpr176) of Mus musculus (Mouse).